The chain runs to 183 residues: Ribonuclease H (183 aa).

An RNase H type-1 domain is found at 2-151; the sequence is SQARFIAFSD…VDQLAQAAAR (150 aa). Positions 11, 57, 79, and 143 each coordinate Mg(2+).

Belongs to the RNase H family. In terms of assembly, monomer. Requires Mg(2+) as cofactor.

The protein resides in the cytoplasm. The catalysed reaction is Endonucleolytic cleavage to 5'-phosphomonoester.. In terms of biological role, endonuclease that specifically degrades the RNA of RNA-DNA hybrids. This Anaeromyxobacter sp. (strain K) protein is Ribonuclease H.